A 479-amino-acid chain; its full sequence is Sulfate adenylyltransferase subunit 1 (479 aa).

The 215-residue stretch at 25-239 (KSLLRFLTCG…EVLETVDIQR (215 aa)) folds into the tr-type G domain. The tract at residues 34 to 41 (GSVDDGKS) is G1. 34-41 (GSVDDGKS) serves as a coordination point for GTP. A G2 region spans residues 92–96 (GITID). The interval 113 to 116 (DTPG) is G3. Residues 113 to 117 (DTPGH) and 168 to 171 (NKMD) contribute to the GTP site. Residues 168–171 (NKMD) are G4. Positions 206–208 (SAL) are G5.

The protein belongs to the TRAFAC class translation factor GTPase superfamily. Classic translation factor GTPase family. CysN/NodQ subfamily. Heterodimer composed of CysD, the smaller subunit, and CysN.

The enzyme catalyses sulfate + ATP + H(+) = adenosine 5'-phosphosulfate + diphosphate. Its pathway is sulfur metabolism; hydrogen sulfide biosynthesis; sulfite from sulfate: step 1/3. With CysD forms the ATP sulfurylase (ATPS) that catalyzes the adenylation of sulfate producing adenosine 5'-phosphosulfate (APS) and diphosphate, the first enzymatic step in sulfur assimilation pathway. APS synthesis involves the formation of a high-energy phosphoric-sulfuric acid anhydride bond driven by GTP hydrolysis by CysN coupled to ATP hydrolysis by CysD. In Salmonella paratyphi A (strain ATCC 9150 / SARB42), this protein is Sulfate adenylyltransferase subunit 1.